Here is a 430-residue protein sequence, read N- to C-terminus: Glial fibrillary acidic protein (430 aa).

The disordered stretch occupies residues 1–31 (MERRRITSARRSYASSETMVRGHGPTRHLGT). Residues 1-70 (MERRRITSAR…KETRASERAE (70 aa)) are head. Thr-7 bears the Phosphothreonine; by AURKB and ROCK1 mark. A compositionally biased stretch (polar residues) spans 9–18 (ARRSYASSET). Residue Arg-11 is modified to Omega-N-methylarginine. Ser-12 carries the phosphoserine modification. Residue Arg-21 is modified to Omega-N-methylarginine. Arg-34 carries the citrulline modification. A Phosphoserine; by AURKB and ROCK1 modification is found at Ser-36. Thr-41 carries the phosphothreonine modification. One can recognise an IF rod domain in the interval 67–375 (ERAEMMELND…KLLEGEENRI (309 aa)). The coil 1A stretch occupies residues 71-102 (MMELNDRFASYIEKVRFLEQQNKALAAELNQL). At Ser-80 the chain carries Phosphoserine. The linker 1 stretch occupies residues 103-113 (RAKEPTKLADV). Residues Thr-108 and Thr-148 each carry the phosphothreonine modification. Positions 114–212 (YQAELRELRL…EEEVRELQEQ (99 aa)) are coil 1B. The linker 12 stretch occupies residues 213-228 (LAQQQVHVEMDVAKPD). The segment at 229 to 250 (LTAALREIRTQYEAVATSNMQE) is coil 2A. The interval 251-254 (TEEW) is linker 2. Residues 255-375 (YRSKFADLTD…KLLEGEENRI (121 aa)) form a coil 2B region. Ser-267 carries the phosphoserine modification. Arg-268 carries the citrulline modification. Residue Ser-321 is modified to Phosphoserine. The segment at 376–430 (TIPVQTFSNLQIRETSLDTKSVSEGHLKRNIVVKTVEMRDGEVIKESKQEHKDVM) is tail. Thr-381 is subject to Phosphothreonine. A Phosphoserine modification is found at Ser-383. A citrulline mark is found at Arg-404 and Arg-414.

The protein belongs to the intermediate filament family. Interacts with SYNM. As to quaternary structure, interacts with PSEN1 (via N-terminus). Phosphorylated by PKN1. As to expression, expressed in the cortex and hippocampus. Expression decreases following acute and chronic corticosterone treatment.

The protein resides in the cytoplasm. GFAP, a class-III intermediate filament, is a cell-specific marker that, during the development of the central nervous system, distinguishes astrocytes from other glial cells. The chain is Glial fibrillary acidic protein (Gfap) from Rattus norvegicus (Rat).